Here is a 180-residue protein sequence, read N- to C-terminus: Magnetosome protein MamS (180 aa).

The Cytoplasmic segment spans residues 1-21; the sequence is MDFRPDQVVARIRGAVEGALT. A helical membrane pass occupies residues 22 to 42; that stretch reads AQSVLGIGGALVLILVVIALL. Topologically, residues 43–180 are lumenal; sequence PDRFTRGEGK…EGLALWMTVQ (138 aa).

The protein belongs to the magnetosome MamS family.

Its subcellular location is the magnetosome membrane. Functionally, may play a role in magnetite crystal growth and size. In Magnetospirillum gryphiswaldense (strain DSM 6361 / JCM 21280 / NBRC 15271 / MSR-1), this protein is Magnetosome protein MamS.